The sequence spans 274 residues: Siroheme biosynthesis protein MET8 (274 aa).

NAD(+)-binding positions include 23–24 (EV), 43–45 (SPD), and Phe-93. Asp-141 functions as the Proton acceptor in the catalytic mechanism.

It belongs to the precorrin-2 dehydrogenase / sirohydrochlorin ferrochelatase family. MET8 subfamily. As to quaternary structure, homodimer.

It catalyses the reaction precorrin-2 + NAD(+) = sirohydrochlorin + NADH + 2 H(+). The enzyme catalyses siroheme + 2 H(+) = sirohydrochlorin + Fe(2+). It functions in the pathway porphyrin-containing compound metabolism; siroheme biosynthesis; siroheme from sirohydrochlorin: step 1/1. Its pathway is porphyrin-containing compound metabolism; siroheme biosynthesis; sirohydrochlorin from precorrin-2: step 1/1. Its function is as follows. Catalyzes the conversion of precorrin-2 into siroheme. This reaction consist of the NAD-dependent oxidation of precorrin-2 into sirohydrochlorin and its subsequent ferrochelation into siroheme. This is Siroheme biosynthesis protein MET8 from Saccharomyces cerevisiae (strain ATCC 204508 / S288c) (Baker's yeast).